The primary structure comprises 118 residues: Holo-[acyl-carrier-protein] synthase (118 aa).

Asp-6 and Glu-55 together coordinate Mg(2+).

This sequence belongs to the P-Pant transferase superfamily. AcpS family. Mg(2+) serves as cofactor.

It localises to the cytoplasm. The enzyme catalyses apo-[ACP] + CoA = holo-[ACP] + adenosine 3',5'-bisphosphate + H(+). Functionally, transfers the 4'-phosphopantetheine moiety from coenzyme A to a Ser of acyl-carrier-protein. The polypeptide is Holo-[acyl-carrier-protein] synthase (Chlorobium chlorochromatii (strain CaD3)).